Reading from the N-terminus, the 147-residue chain is Large ribosomal subunit protein uL11 (147 aa).

Belongs to the universal ribosomal protein uL11 family. Part of the ribosomal stalk of the 50S ribosomal subunit. Interacts with L10 and the large rRNA to form the base of the stalk. L10 forms an elongated spine to which L12 dimers bind in a sequential fashion forming a multimeric L10(L12)X complex. In terms of processing, one or more lysine residues are methylated.

Functionally, forms part of the ribosomal stalk which helps the ribosome interact with GTP-bound translation factors. This chain is Large ribosomal subunit protein uL11, found in Phocaeicola vulgatus (strain ATCC 8482 / DSM 1447 / JCM 5826 / CCUG 4940 / NBRC 14291 / NCTC 11154) (Bacteroides vulgatus).